The primary structure comprises 217 residues: Peptide methionine sulfoxide reductase MsrA (217 aa).

The active site involves Cys-54.

It belongs to the MsrA Met sulfoxide reductase family.

It catalyses the reaction L-methionyl-[protein] + [thioredoxin]-disulfide + H2O = L-methionyl-(S)-S-oxide-[protein] + [thioredoxin]-dithiol. The enzyme catalyses [thioredoxin]-disulfide + L-methionine + H2O = L-methionine (S)-S-oxide + [thioredoxin]-dithiol. In terms of biological role, has an important function as a repair enzyme for proteins that have been inactivated by oxidation. Catalyzes the reversible oxidation-reduction of methionine sulfoxide in proteins to methionine. The chain is Peptide methionine sulfoxide reductase MsrA from Maricaulis maris (strain MCS10) (Caulobacter maris).